We begin with the raw amino-acid sequence, 364 residues long: MNKYKKFLPLLVLIPFLASCGSDTPTRKGSKKPRPDYSKNTNGLDILMGQFSRNIDQIWGVNELLQASQKDYVKYTDKYYTRSHISFEDGQIIIETLADHNRLRNSIIHTLLMGSDATGIDLFASGDVPISNNPFLAGQVVDQYGRSVTNVAVANDFATYLLQNKLKTRRLKNGHTVTYVTIPMIANHVEVRARRYLPLVRQMSKRYGIDMSLILGIMEVESAFNPYAVSYANAIGLMQVVPRTAGRDIFARKGFGGQPNRDYLYNPSQNIDAGTMFLTILRDEYLEGITDPTSKRYAMISAYNSGAGAVLRVFDNDKLMAIERINNLDPSAIYRILTTAHPSSQARNYLVKVNKAQQKYRNVR.

Residues 1–19 form the signal peptide; sequence MNKYKKFLPLLVLIPFLAS. The N-palmitoyl cysteine moiety is linked to residue Cys-20. A lipid anchor (S-diacylglycerol cysteine) is attached at Cys-20.

This sequence belongs to the transglycosylase Slt family.

It localises to the cell outer membrane. It catalyses the reaction Exolytic cleavage of the (1-&gt;4)-beta-glycosidic linkage between N-acetylmuramic acid (MurNAc) and N-acetylglucosamine (GlcNAc) residues in peptidoglycan, from either the reducing or the non-reducing ends of the peptidoglycan chains, with concomitant formation of a 1,6-anhydrobond in the MurNAc residue.. In terms of biological role, murein-degrading enzyme. May play a role in recycling of muropeptides during cell elongation and/or cell division. This Glaesserella parasuis serovar 5 (strain SH0165) (Haemophilus parasuis) protein is Membrane-bound lytic murein transglycosylase C.